A 331-amino-acid chain; its full sequence is Pseudouridylate synthase TRUB2, mitochondrial (331 aa).

The N-terminal 10 residues, 1-10 (MGSAGLSRLH), are a transit peptide targeting the mitochondrion. D98 functions as the Nucleophile in the catalytic mechanism. Positions 296–331 (KSLSPGLDTKQLPSPGWSWDSQGPSSTLGLERGAGQ) are disordered. Positions 314–323 (WDSQGPSSTL) are enriched in polar residues.

This sequence belongs to the pseudouridine synthase TruB family. As to quaternary structure, forms a regulatory protein-RNA complex, consisting of RCC1L, NGRN, RPUSD3, RPUSD4, TRUB2, FASTKD2 and 16S mt-rRNA.

Its subcellular location is the mitochondrion matrix. The enzyme catalyses a uridine in mRNA = a pseudouridine in mRNA. It carries out the reaction uridine(55) in tRNA = pseudouridine(55) in tRNA. In terms of biological role, minor enzyme contributing to the isomerization of uridine to pseudouridine (pseudouridylation) of specific mitochondrial mRNAs (mt-mRNAs) such as COXI and COXIII mt-mRNAs. As a component of a functional protein-RNA module, consisting of RCC1L, NGRN, RPUSD3, RPUSD4, TRUB2, FASTKD2 and 16S mitochondrial ribosomal RNA (16S mt-rRNA), controls 16S mt-rRNA abundance and is required for intra-mitochondrial translation. Also catalyzes pseudouridylation of some tRNAs, including synthesis of pseudouridine(55) from uracil-55, in the psi GC loop of a subset of tRNAs. This chain is Pseudouridylate synthase TRUB2, mitochondrial, found in Homo sapiens (Human).